Here is a 342-residue protein sequence, read N- to C-terminus: Autoinducer 2 import system permease protein LsrC (342 aa).

Topologically, residues 1-13 (MLKFIQNNREITA) are periplasmic. A helical membrane pass occupies residues 14–34 (LLAVVLLFVLPGFLDRQYLSV). Residues 35–38 (QTLT) lie on the Cytoplasmic side of the membrane. A helical transmembrane segment spans residues 39–59 (MVYSSAQILILLAMGATLVML). The Periplasmic segment spans residues 60 to 69 (TRNIDVSVGS). The helical transmembrane segment at 70 to 90 (ITGMCAVLLGMLLNAGYSLPV) threads the bilayer. Topologically, residues 91-92 (AC) are cytoplasmic. Residues 93-113 (VTTLLLGLLAGFFNGVLVAWL) form a helical membrane-spanning segment. Position 114 (lysine 114) is a topological domain, periplasmic. The helical transmembrane segment at 115 to 135 (IPAIVATLGTLGLYRGIMLLW) threads the bilayer. Residues 136–154 (TGGKWIEGLPAELKQLSAP) lie on the Cytoplasmic side of the membrane. Residues 155 to 175 (LLFGVSAIGWLTIILVAFMAW) form a helical membrane-spanning segment. Topologically, residues 176 to 212 (LLAKTAFGRSFYATGDNLQGARQLGVRTEAIRIVAFS) are periplasmic. The helical transmembrane segment at 213 to 233 (LNGCMAALAGIVFASQIGFIP) threads the bilayer. At 234–251 (NQTGTGLEMKAIAACVLG) the chain is on the cytoplasmic side. The chain crosses the membrane as a helical span at residues 252–272 (GISLLGGSGAIIGAVLGAWFL). Residues 273–283 (TQIDSVLVLLR) are Periplasmic-facing. Residues 284–304 (IPAWWNDFIAGLVLLAVLVFD) traverse the membrane as a helical segment. Topologically, residues 305-342 (GRLRCALERNLRRQKYARFMTPPPSVKPASSGKKREAA) are cytoplasmic.

The protein belongs to the binding-protein-dependent transport system permease family. AraH/RbsC subfamily. As to quaternary structure, the complex is composed of two ATP-binding proteins (LsrA), two transmembrane proteins (LsrC and LsrD) and a solute-binding protein (LsrB).

Its subcellular location is the cell inner membrane. Part of the ABC transporter complex LsrABCD involved in autoinducer 2 (AI-2) import. Probably responsible for the translocation of the substrate across the membrane. In Escherichia coli O9:H4 (strain HS), this protein is Autoinducer 2 import system permease protein LsrC (lsrC).